Reading from the N-terminus, the 224-residue chain is BTB/POZ domain-containing protein At5g48510 (224 aa).

The 75-residue stretch at 24 to 98 (VDVMLKAKNS…ICSDGSMLSA (75 aa)) folds into the BTB domain.

Interacts with CUL3A.

It functions in the pathway protein modification; protein ubiquitination. In terms of biological role, may act as a substrate-specific adapter of an E3 ubiquitin-protein ligase complex (CUL3-RBX1-BTB) which mediates the ubiquitination and subsequent proteasomal degradation of target proteins. The sequence is that of BTB/POZ domain-containing protein At5g48510 from Arabidopsis thaliana (Mouse-ear cress).